Reading from the N-terminus, the 354-residue chain is Polyribonucleotide 5'-hydroxyl-kinase PF0112 (354 aa).

36-43 (GDVDTGKT) is an ATP binding site.

The cofactor is a divalent metal cation.

The enzyme catalyses a 5'-end dephospho-2'-deoxyribonucleoside-DNA + ATP = a 5'-end 5'-phospho-2'-deoxyribonucleoside-DNA + ADP + H(+). It carries out the reaction a 5'-end dephospho-ribonucleoside-RNA + ATP = a 5'-end 5'-phospho-ribonucleoside-RNA + ADP + H(+). Its function is as follows. Polynucleotide kinase that can phosphorylate the 5'-hydroxyl groups of both single-stranded RNA (ssRNA) and single-stranded DNA (ssDNA). Exhibits a strong preference for ssRNA. This is Polyribonucleotide 5'-hydroxyl-kinase PF0112 from Pyrococcus furiosus (strain ATCC 43587 / DSM 3638 / JCM 8422 / Vc1).